The sequence spans 459 residues: Cysteine desulfurase (459 aa).

A mitochondrion-targeting transit peptide spans 1–17 (MVGSVAGNMLLRAAWRR). Residues alanine 129, threonine 130, glutamine 237, serine 257, and histidine 259 each contribute to the pyridoxal 5'-phosphate site. Lysine 260 is modified (N6-(pyridoxal phosphate)lysine). A pyridoxal 5'-phosphate-binding site is contributed by threonine 297. Residue cysteine 383 is the Cysteine persulfide intermediate of the active site. Cysteine 383 contributes to the [2Fe-2S] cluster binding site. Cysteine 383 lines the Zn(2+) pocket. Cysteine 383 carries the post-translational modification Cysteine persulfide.

It belongs to the class-V pyridoxal-phosphate-dependent aminotransferase family. NifS/IscS subfamily. As to quaternary structure, homodimer. Component of the mitochondrial core iron-sulfur cluster (ISC) complex composed of NFS1, LYRM4, NDUFAB1, ISCU, FXN, and FDX2; this complex is a heterohexamer containing two copies of each monomer. Component of cyteine desulfurase complex composed of NFS1, LYRM4 and NDUFAB1; this complex contributes to the activation of cysteine desulfurase activity and NFS1 stabilization. Interacts (homodimer form) with ISCU (D-state); each monomer interacts with the C-terminal regions of each NFS1 monomer. Interacts with HSPA9. Interacts (via homodimer form) with FDX2. Interacts (via homodimer form) with FXN. Interacts with LYRM4. Component of a complex composed of FXN, NFS1, LYRM4 and ISCU. Pyridoxal 5'-phosphate is required as a cofactor. Post-translationally, N-gluconoylated. Cysteine persulfide intermediate is reduced by thiol-containing molecules like glutathione and L-cysteine. Persulfide reduction is a rate-limiting step of cysteine desulfurase catalytic cycle. As to expression, ubiquitous.

The protein localises to the mitochondrion. The enzyme catalyses (sulfur carrier)-H + L-cysteine = (sulfur carrier)-SH + L-alanine. The catalysed reaction is L-cysteinyl-[cysteine desulfurase] + L-cysteine = S-sulfanyl-L-cysteinyl-[cysteine desulfurase] + L-alanine. Active only in complex with LYRM4. In terms of biological role, mitochondrial cysteine desulfurase, of the core iron-sulfur cluster (ISC) assembly complex, that catalyzes the desulfuration of L-cysteine to L-alanine, as component of the cysteine desulfurase complex, leading to the formation of a cysteine persulfide intermediate at the active site cysteine residue and participates in the [2Fe-2S] clusters assembly on the scaffolding protein ISCU. The persulfide is then transferred on the flexible Cys loop from the catalytic site of NFS1 to the surface of NFS1. After the NFS1-linked persulfide sulfur is transferred to one of the conserved Cys residues of the scaffold, a reaction assisted by FXN. The core iron-sulfur cluster (ISC) assembly complex is involved in the de novo synthesis of a [2Fe-2S] cluster, the first step of the mitochondrial iron-sulfur protein biogenesis. This process is initiated by the cysteine desulfurase complex (NFS1:LYRM4:NDUFAB1) that produces persulfide which is delivered on the scaffold protein ISCU in a FXN-dependent manner. Then this complex is stabilized by FDX2 which provides reducing equivalents to accomplish the [2Fe-2S] cluster assembly. Finally, the [2Fe-2S] cluster is transferred from ISCU to chaperone proteins, including HSCB, HSPA9 and GLRX5. The sequence is that of Cysteine desulfurase from Mus musculus (Mouse).